A 206-amino-acid chain; its full sequence is Uracil phosphoribosyltransferase (206 aa).

Residues Arg-76, Arg-101, and 128 to 136 (DPMLATGTT) contribute to the 5-phospho-alpha-D-ribose 1-diphosphate site. Uracil contacts are provided by residues Ile-191 and 196–198 (GDA). A 5-phospho-alpha-D-ribose 1-diphosphate-binding site is contributed by Asp-197.

Belongs to the UPRTase family. It depends on Mg(2+) as a cofactor.

The catalysed reaction is UMP + diphosphate = 5-phospho-alpha-D-ribose 1-diphosphate + uracil. The protein operates within pyrimidine metabolism; UMP biosynthesis via salvage pathway; UMP from uracil: step 1/1. Allosterically activated by GTP. Catalyzes the conversion of uracil and 5-phospho-alpha-D-ribose 1-diphosphate (PRPP) to UMP and diphosphate. This Mycoplasma genitalium (strain ATCC 33530 / DSM 19775 / NCTC 10195 / G37) (Mycoplasmoides genitalium) protein is Uracil phosphoribosyltransferase.